A 295-amino-acid polypeptide reads, in one-letter code: Cytidine deaminase (295 aa).

CMP/dCMP-type deaminase domains lie at 48–168 (ADDE…FGPA) and 187–295 (EETT…YLAI). 89-91 (NLE) is a binding site for substrate. Zn(2+) is bound at residue His102. Residue Glu104 is the Proton donor of the active site. 2 residues coordinate Zn(2+): Cys129 and Cys132.

It belongs to the cytidine and deoxycytidylate deaminase family. Homodimer. It depends on Zn(2+) as a cofactor.

The enzyme catalyses cytidine + H2O + H(+) = uridine + NH4(+). The catalysed reaction is 2'-deoxycytidine + H2O + H(+) = 2'-deoxyuridine + NH4(+). In terms of biological role, this enzyme scavenges exogenous and endogenous cytidine and 2'-deoxycytidine for UMP synthesis. The sequence is that of Cytidine deaminase from Vibrio atlanticus (strain LGP32) (Vibrio splendidus (strain Mel32)).